Reading from the N-terminus, the 380-residue chain is Cytochrome b (380 aa).

4 helical membrane-spanning segments follow: residues 33-53 (FGSL…FLAM), 77-98 (WLIR…FLHV), 113-133 (WNMG…GYVL), and 178-198 (FFAF…VHLL). Residues His-83 and His-97 each coordinate heme b. Residues His-182 and His-196 each coordinate heme b. His-201 lines the a ubiquinone pocket. 4 consecutive transmembrane segments (helical) span residues 226 to 246 (IKDL…VLFF), 288 to 308 (LGGV…PLLH), 320 to 340 (ITQT…WIGG), and 347 to 367 (FIMI…IFMP).

Belongs to the cytochrome b family. In terms of assembly, the cytochrome bc1 complex contains 11 subunits: 3 respiratory subunits (MT-CYB, CYC1 and UQCRFS1), 2 core proteins (UQCRC1 and UQCRC2) and 6 low-molecular weight proteins (UQCRH/QCR6, UQCRB/QCR7, UQCRQ/QCR8, UQCR10/QCR9, UQCR11/QCR10 and a cleavage product of UQCRFS1). This cytochrome bc1 complex then forms a dimer. The cofactor is heme b.

It is found in the mitochondrion inner membrane. Component of the ubiquinol-cytochrome c reductase complex (complex III or cytochrome b-c1 complex) that is part of the mitochondrial respiratory chain. The b-c1 complex mediates electron transfer from ubiquinol to cytochrome c. Contributes to the generation of a proton gradient across the mitochondrial membrane that is then used for ATP synthesis. The sequence is that of Cytochrome b (MT-CYB) from Synaptomys borealis (Northern bog lemming).